A 130-amino-acid polypeptide reads, in one-letter code: S-adenosylmethionine decarboxylase proenzyme (130 aa).

The active-site Schiff-base intermediate with substrate; via pyruvic acid is the S66. The residue at position 66 (S66) is a Pyruvic acid (Ser); by autocatalysis. H71 (proton acceptor; for processing activity) is an active-site residue. Residue C86 is the Proton donor; for catalytic activity of the active site.

The protein belongs to the prokaryotic AdoMetDC family. Type 1 subfamily. In terms of assembly, heterotetramer of two alpha and two beta chains arranged as a dimer of alpha/beta heterodimers. Requires pyruvate as cofactor. In terms of processing, is synthesized initially as an inactive proenzyme. Formation of the active enzyme involves a self-maturation process in which the active site pyruvoyl group is generated from an internal serine residue via an autocatalytic post-translational modification. Two non-identical subunits are generated from the proenzyme in this reaction, and the pyruvate is formed at the N-terminus of the alpha chain, which is derived from the carboxyl end of the proenzyme. The post-translation cleavage follows an unusual pathway, termed non-hydrolytic serinolysis, in which the side chain hydroxyl group of the serine supplies its oxygen atom to form the C-terminus of the beta chain, while the remainder of the serine residue undergoes an oxidative deamination to produce ammonia and the pyruvoyl group blocking the N-terminus of the alpha chain.

The enzyme catalyses S-adenosyl-L-methionine + H(+) = S-adenosyl 3-(methylsulfanyl)propylamine + CO2. It participates in amine and polyamine biosynthesis; S-adenosylmethioninamine biosynthesis; S-adenosylmethioninamine from S-adenosyl-L-methionine: step 1/1. In terms of biological role, catalyzes the decarboxylation of S-adenosylmethionine to S-adenosylmethioninamine (dcAdoMet), the propylamine donor required for the synthesis of the polyamines spermine and spermidine from the diamine putrescine. This Bacillus cytotoxicus (strain DSM 22905 / CIP 110041 / 391-98 / NVH 391-98) protein is S-adenosylmethionine decarboxylase proenzyme.